The chain runs to 515 residues: Bifunctional purine biosynthesis protein PurH (515 aa).

Residues 1–145 form the MGS-like domain; sequence MTKRALISVS…KNHASVTVVV (145 aa).

This sequence belongs to the PurH family.

The enzyme catalyses (6R)-10-formyltetrahydrofolate + 5-amino-1-(5-phospho-beta-D-ribosyl)imidazole-4-carboxamide = 5-formamido-1-(5-phospho-D-ribosyl)imidazole-4-carboxamide + (6S)-5,6,7,8-tetrahydrofolate. It carries out the reaction IMP + H2O = 5-formamido-1-(5-phospho-D-ribosyl)imidazole-4-carboxamide. Its pathway is purine metabolism; IMP biosynthesis via de novo pathway; 5-formamido-1-(5-phospho-D-ribosyl)imidazole-4-carboxamide from 5-amino-1-(5-phospho-D-ribosyl)imidazole-4-carboxamide (10-formyl THF route): step 1/1. It participates in purine metabolism; IMP biosynthesis via de novo pathway; IMP from 5-formamido-1-(5-phospho-D-ribosyl)imidazole-4-carboxamide: step 1/1. The chain is Bifunctional purine biosynthesis protein PurH from Streptococcus pyogenes serotype M3 (strain ATCC BAA-595 / MGAS315).